A 132-amino-acid chain; its full sequence is Small ribosomal subunit protein uS8 (132 aa).

It belongs to the universal ribosomal protein uS8 family. As to quaternary structure, part of the 30S ribosomal subunit. Contacts proteins S5 and S12.

Its function is as follows. One of the primary rRNA binding proteins, it binds directly to 16S rRNA central domain where it helps coordinate assembly of the platform of the 30S subunit. The chain is Small ribosomal subunit protein uS8 from Lactobacillus delbrueckii subsp. bulgaricus (strain ATCC BAA-365 / Lb-18).